The chain runs to 142 residues: Coiled-coil-helix-coiled-coil-helix domain-containing protein 10, mitochondrial (142 aa).

The N-terminal 16 residues, 1-16 (MPRGSRSAASRPASRP), are a transit peptide targeting the mitochondrion. A compositionally biased stretch (low complexity) spans 1-20 (MPRGSRSAASRPASRPAAPS). Disordered stretches follow at residues 1–45 (MPRG…PGLM) and 68–97 (ALTGAFSGGSSEPSQPAVQQAPTPAAPQPL). Over residues 21–39 (AHPPAHPPPSAAAPAPAPS) the composition is skewed to pro residues. A compositionally biased stretch (low complexity) spans 80–90 (PSQPAVQQAPT). Residues 99–140 (MGPCAYEIRQFLDCSTTQSDLSLCEGFSEALKQCKYYHGLSS) form the CHCH domain. 2 consecutive short sequence motifs (cx9C motif) follow at residues 102-112 (CAYEIRQFLDC) and 122-132 (CEGFSEALKQC). 2 cysteine pairs are disulfide-bonded: C102-C132 and C112-C122.

Ubiquitously expressed. Higher expression is observed in heart and liver.

The protein localises to the mitochondrion intermembrane space. Its function is as follows. May be involved in the maintenance of mitochondrial organization and mitochondrial cristae structure. The polypeptide is Coiled-coil-helix-coiled-coil-helix domain-containing protein 10, mitochondrial (CHCHD10) (Homo sapiens (Human)).